The chain runs to 920 residues: Non-structural polyprotein 1A (920 aa).

A run of 4 helical transmembrane segments spans residues Val-239–Gly-259, Val-286–Val-306, Leu-313–Met-333, and Gly-344–Thr-364. Catalysis depends on charge relay system; for serine protease activity residues His-461, Asp-489, and Ser-551. Tyr-693 carries the post-translational modification O-(5'-phospho-RNA)-tyrosine. Disordered regions lie at residues Phe-753 to Thr-813 and Asn-900 to His-920. The span at Ser-783–Gln-795 shows a compositional bias: basic and acidic residues. Over residues Thr-800–Thr-813 the composition is skewed to polar residues.

This sequence belongs to the astroviridae polyprotein 1A family. Monomer. In terms of processing, cleaved by the viral and host proteases. The protease is probably autocatalytically cleaved. Post-translationally, cleaved presumably by viral and host proteases.

Its subcellular location is the host membrane. The enzyme catalyses RNA(n) + a ribonucleoside 5'-triphosphate = RNA(n+1) + diphosphate. Functionally, responsible for the cleavage of the polyprotein into functional products. Covalently attached to the 5' extremity of the genomic and subgenomic RNAs. It may serve as a primer for the replicase. This chain is Non-structural polyprotein 1A (ORF1), found in Human astrovirus-4 (HAstV-4).